Reading from the N-terminus, the 518-residue chain is DNA-binding protein D-ETS-4 (518 aa).

Disordered stretches follow at residues 74-113 and 152-172; these read SQPI…QSSP and LPPS…SCGE. The span at 84–94 shows a compositional bias: polar residues; the sequence is TAPYTNPSSHQ. Residues 102 to 113 are compositionally biased toward low complexity; sequence PHSAYPSPQSSP. Residues 158 to 171 show a composition bias toward polar residues; that stretch reads ESNCETPSPRSSCG. A PNT domain is found at 258-344; the sequence is HAKREADAIC…AQLEIWKMAY (87 aa). Residues 393–426 are disordered; that stretch reads APLNGSTTSPPATNASNGGTATVKRPNGGRTGGG. A compositionally biased stretch (polar residues) spans 396-412; it reads NGSTTSPPATNASNGGT. Positions 430-513 form a DNA-binding region, ETS; the sequence is IHLWQFLKEL…RSQRLVYQFC (84 aa).

The protein belongs to the ETS family. Transient high expression in pole cells during embryonic stages 8-11.

Its subcellular location is the nucleus. Functionally, may have a role in germline development. The polypeptide is DNA-binding protein D-ETS-4 (Ets98B) (Drosophila melanogaster (Fruit fly)).